The primary structure comprises 238 residues: Ribonuclease 3 (238 aa).

Positions Ile-4–Gly-127 constitute an RNase III domain. Residue Glu-40 participates in Mg(2+) binding. Asp-44 is an active-site residue. Mg(2+) contacts are provided by Asn-113 and Glu-116. Residue Glu-116 is part of the active site. In terms of domain architecture, DRBM spans Asp-154–Arg-223.

Belongs to the ribonuclease III family. In terms of assembly, homodimer. Mg(2+) is required as a cofactor.

It localises to the cytoplasm. It carries out the reaction Endonucleolytic cleavage to 5'-phosphomonoester.. Its function is as follows. Digests double-stranded RNA. Involved in the processing of primary rRNA transcript to yield the immediate precursors to the large and small rRNAs (23S and 16S). Processes some mRNAs, and tRNAs when they are encoded in the rRNA operon. Processes pre-crRNA and tracrRNA of type II CRISPR loci if present in the organism. The polypeptide is Ribonuclease 3 (Wolinella succinogenes (strain ATCC 29543 / DSM 1740 / CCUG 13145 / JCM 31913 / LMG 7466 / NCTC 11488 / FDC 602W) (Vibrio succinogenes)).